Consider the following 126-residue polypeptide: Protein ApaG (126 aa).

An ApaG domain is found at 2 to 126 (NQRLSPIKVE…FSLAVPGLLH (125 aa)).

The sequence is that of Protein ApaG from Shewanella piezotolerans (strain WP3 / JCM 13877).